A 469-amino-acid chain; its full sequence is Probable ribonuclease FAU-1 (469 aa).

Belongs to the FAU-1 family.

In terms of biological role, probable RNase involved in rRNA stability through maturation and/or degradation of precursor rRNAs. Binds to RNA in loop regions with AU-rich sequences. The protein is Probable ribonuclease FAU-1 of Ignicoccus hospitalis (strain KIN4/I / DSM 18386 / JCM 14125).